The chain runs to 146 residues: Small nuclear ribonucleoprotein Sm D1 (146 aa).

The Sm domain occupies 2–101 (KLVNFLKKLR…IRQIILPDSL (100 aa)). The segment at 118-146 (RSGQIANDPSKKRRRDFGAPANKRPRRGL) is disordered. The Nuclear localization signal signature appears at 128–144 (KKRRRDFGAPANKRPRR).

This sequence belongs to the snRNP core protein family. As to quaternary structure, component of the Sm core complex, present in spliceosomal snRNP U1, U2, U4/U6 and U5. The core complex contains SMB1, SMD1, SMD2, SMD3, SME1, SMX3 and SMX2 (Sm proteins B, D1, D2, D3, E, F and G, respectively), and is probably a heptameric ring structure. Belongs to the CWC complex (or CEF1-associated complex), a spliceosome sub-complex reminiscent of a late-stage spliceosome composed of the U2, U5 and U6 snRNAs and at least BUD13, BUD31, BRR2, CDC40, CEF1, CLF1, CUS1, CWC2, CWC15, CWC21, CWC22, CWC23, CWC24, CWC25, CWC27, ECM2, HSH155, IST3, ISY1, LEA1, MSL1, NTC20, PRP8, PRP9, PRP11, PRP19, PRP21, PRP22, PRP45, PRP46, SLU7, SMB1, SMD1, SMD2, SMD3, SMX2, SMX3, SNT309, SNU114, SPP2, SYF1, SYF2, RSE1 and YJU2. Component of the U4/U6-U5 tri-snRNP complex composed of the U4, U6 and U5 snRNAs and at least PRP3, PRP4, PRP6, PRP8, PRP18, PRP31, PRP38, SNU13, SNU23, SNU66, SNU114, SPP381, SMB1, SMD1, SMD2, SMD3, SMX2, SMX3, LSM2, LSM3, LSM4, LSM5, LSM6, LSM7, LSM8, BRR2 and DIB1.

The protein localises to the nucleus. Its subcellular location is the cytoplasm. Lays a role in pre-mRNA splicing as a core component of the spliceosomal U1, U2, U4 and U5 small nuclear ribonucleoproteins (snRNPs), the building blocks of the spliceosome. Also binds telomerase RNA and is required for its accumulation. This Saccharomyces cerevisiae (strain ATCC 204508 / S288c) (Baker's yeast) protein is Small nuclear ribonucleoprotein Sm D1 (SMD1).